The sequence spans 186 residues: Ribosome-recycling factor (186 aa).

The protein belongs to the RRF family.

The protein resides in the cytoplasm. Responsible for the release of ribosomes from messenger RNA at the termination of protein biosynthesis. May increase the efficiency of translation by recycling ribosomes from one round of translation to another. The polypeptide is Ribosome-recycling factor (Chlorobaculum tepidum (strain ATCC 49652 / DSM 12025 / NBRC 103806 / TLS) (Chlorobium tepidum)).